Consider the following 496-residue polypeptide: Angiopoietin-2 (496 aa).

A signal peptide spans 1 to 18 (MWQIIFLTFGWDLVLASA). 6 N-linked (GlcNAc...) asparagine glycosylation sites follow: N89, N119, N133, N151, N240, and N304. The stretch at 159 to 256 (QLLQHSISTN…QQHDLMETVN (98 aa)) forms a coiled coil. A Fibrinogen C-terminal domain is found at 275-495 (KEEQTTFRDC…ATTMMIRPAD (221 aa)). C284 and C313 are disulfide-bonded. Ca(2+) contacts are provided by D429, D431, C433, and C435. Cystine bridges form between C433–C435 and C437–C450.

In terms of assembly, interacts with TEK/TIE2, competing for the same binding site as ANGPT1. Interacts with ITGA5. Interacts with SVEP1/polydom. Interacts with THBD; this interaction significantly inhibits the generation of activated PC and TAFIa/CPB2 by the thrombin/thrombomodulin complex. In terms of tissue distribution, expressed in the ovary, uterus and placenta.

It localises to the secreted. Functionally, binds to TEK/TIE2, competing for the ANGPT1 binding site, and modulating ANGPT1 signaling. Can induce tyrosine phosphorylation of TEK/TIE2 in the absence of ANGPT1. In the absence of angiogenic inducers, such as VEGF, ANGPT2-mediated loosening of cell-matrix contacts may induce endothelial cell apoptosis with consequent vascular regression. In concert with VEGF, it may facilitate endothelial cell migration and proliferation, thus serving as a permissive angiogenic signal. Involved in the regulation of lymphangiogenesis. The protein is Angiopoietin-2 (Angpt2) of Mus musculus (Mouse).